Here is a 317-residue protein sequence, read N- to C-terminus: sn-1-specific diacylglycerol lipase ABHD11 (317 aa).

The transit peptide at 1-20 directs the protein to the mitochondrion; the sequence is MSNFAMSALCRVFTRGAPCG. Residues 69–304 enclose the AB hydrolase-1 domain; sequence PLVFLHGLFG…ASHWIHADKP (236 aa). Residues serine 142, glutamate 238, and histidine 297 each act as charge relay system in the active site.

It belongs to the AB hydrolase superfamily. In terms of processing, phosphorylated.

The protein localises to the mitochondrion. It localises to the mitochondrion matrix. The enzyme catalyses 1-octadecanoyl-2-(5Z,8Z,11Z,14Z-eicosatetraenoyl)-sn-glycerol + H2O = 2-(5Z,8Z,11Z,14Z-eicosatetraenoyl)-glycerol + octadecanoate + H(+). It catalyses the reaction a 1,2-diacyl-sn-glycerol + H2O = a 2-acylglycerol + a fatty acid + H(+). It carries out the reaction a 1,3-diacyl-sn-glycerol + H2O = a 1-acyl-sn-glycerol + a fatty acid + H(+). The catalysed reaction is 1-octadecanoyl-2-(9Z-octadecenoyl)-sn-glycerol + H2O = 2-(9Z-octadecenoyl)-glycerol + octadecanoate + H(+). The enzyme catalyses 1-octadecanoyl-2-(4Z,7Z,10Z,13Z,16Z,19Z-docosahexaenoyl)-sn-glycerol + H2O = 2-(4Z,7Z,10Z,13Z,16Z,19Z-docosahexaenoyl)-glycerol + octadecanoate + H(+). It catalyses the reaction 1,2-didecanoylglycerol + H2O = decanoylglycerol + decanoate + H(+). Catalyzes the hydrolysis of diacylglycerol in vitro and may function as a key regulator in lipid metabolism, namely by regulating the intracellular levels of diacylglycerol. 1,2-diacyl-sn-glycerols are the preferred substrate over 1,3-diacyl-sn-glycerols. The enzyme hydrolyzes stearate in preference to palmitate from the sn-1 position of 1,2-diacyl-sn-glycerols. This Danio rerio (Zebrafish) protein is sn-1-specific diacylglycerol lipase ABHD11.